The primary structure comprises 773 residues: DEAD-box ATP-dependent RNA helicase 32 (773 aa).

The disordered stretch occupies residues Ile28 to Gly71. Residues Ser43–Lys56 are compositionally biased toward low complexity. A Q motif motif is present at residues Ala80 to Arg108. A Helicase ATP-binding domain is found at Leu111–Ile287. Residue Ala124 to Thr131 participates in ATP binding. The short motif at Asp235–Asp238 is the DEAD box element. The region spanning Pro309 to Gln462 is the Helicase C-terminal domain. Positions Asp664–Ala715 form a coiled coil. The span at Leu699–Lys708 shows a compositional bias: basic residues. The disordered stretch occupies residues Leu699–Asp755.

It belongs to the DEAD box helicase family. DDX10/DBP4 subfamily.

It carries out the reaction ATP + H2O = ADP + phosphate + H(+). This chain is DEAD-box ATP-dependent RNA helicase 32, found in Oryza sativa subsp. japonica (Rice).